A 72-amino-acid polypeptide reads, in one-letter code: Exodeoxyribonuclease 7 small subunit (72 aa).

The protein belongs to the XseB family. In terms of assembly, heterooligomer composed of large and small subunits.

It is found in the cytoplasm. It carries out the reaction Exonucleolytic cleavage in either 5'- to 3'- or 3'- to 5'-direction to yield nucleoside 5'-phosphates.. Its function is as follows. Bidirectionally degrades single-stranded DNA into large acid-insoluble oligonucleotides, which are then degraded further into small acid-soluble oligonucleotides. The protein is Exodeoxyribonuclease 7 small subunit of Chlamydia trachomatis serovar A (strain ATCC VR-571B / DSM 19440 / HAR-13).